The primary structure comprises 226 residues: MNTLLVNQLQKKLGYTFKQNELLLQALTHRSASSKHNERLEFLGDSILSYVIANALYHRFPRVDEGDMSRMRATLVRGNTLAELAREFELGECLRLGPGELKSGGFRRESILADTVEALIGAIFLDSDIQNIENIILKWYENRLAEISPGDKQKDPKTRLQEYLQGRHLPLPSYVVVQVRGEAHDQEFTIHCQISGIDQPVKGMGTSRRKAEQAAAEQALIQLELE.

The RNase III domain maps to 6–128 (VNQLQKKLGY…LIGAIFLDSD (123 aa)). Glutamate 41 serves as a coordination point for Mg(2+). Aspartate 45 is a catalytic residue. 2 residues coordinate Mg(2+): aspartate 114 and glutamate 117. Glutamate 117 is a catalytic residue. Residues 155 to 225 (DPKTRLQEYL…AEQALIQLEL (71 aa)) enclose the DRBM domain.

It belongs to the ribonuclease III family. In terms of assembly, homodimer. Mg(2+) is required as a cofactor.

The protein resides in the cytoplasm. It carries out the reaction Endonucleolytic cleavage to 5'-phosphomonoester.. Digests double-stranded RNA. Involved in the processing of primary rRNA transcript to yield the immediate precursors to the large and small rRNAs (23S and 16S). Processes some mRNAs, and tRNAs when they are encoded in the rRNA operon. Processes pre-crRNA and tracrRNA of type II CRISPR loci if present in the organism. This Proteus mirabilis (strain HI4320) protein is Ribonuclease 3.